The following is a 194-amino-acid chain: ATP-dependent Clp protease proteolytic subunit 1 (194 aa).

Residue Ser-99 is the Nucleophile of the active site. His-124 is an active-site residue.

It belongs to the peptidase S14 family. As to quaternary structure, fourteen ClpP subunits assemble into 2 heptameric rings which stack back to back to give a disk-like structure with a central cavity, resembling the structure of eukaryotic proteasomes.

The protein resides in the cytoplasm. It catalyses the reaction Hydrolysis of proteins to small peptides in the presence of ATP and magnesium. alpha-casein is the usual test substrate. In the absence of ATP, only oligopeptides shorter than five residues are hydrolyzed (such as succinyl-Leu-Tyr-|-NHMec, and Leu-Tyr-Leu-|-Tyr-Trp, in which cleavage of the -Tyr-|-Leu- and -Tyr-|-Trp bonds also occurs).. Its function is as follows. Cleaves peptides in various proteins in a process that requires ATP hydrolysis. Has a chymotrypsin-like activity. Plays a major role in the degradation of misfolded proteins. This chain is ATP-dependent Clp protease proteolytic subunit 1, found in Borreliella burgdorferi (strain ATCC 35210 / DSM 4680 / CIP 102532 / B31) (Borrelia burgdorferi).